The primary structure comprises 96 residues: Large ribosomal subunit protein eL14 (96 aa).

The protein belongs to the eukaryotic ribosomal protein eL14 family.

The polypeptide is Large ribosomal subunit protein eL14 (Staphylothermus marinus (strain ATCC 43588 / DSM 3639 / JCM 9404 / F1)).